A 146-amino-acid polypeptide reads, in one-letter code: VHLTDGEKNAISTAWGKVNAAEIGAEALGRLLVVYPWTQRFFDSFGDLSSASAVMGNAKVKAHGKKVIDSFSNGLKHLDNLKGTFASLSELHCDKLHVDPENFKLLGNMIVIVMAHHLGKDFTPEAQAAFQKVVAGVANALSHKYH.

Val-1 bears the N-acetylvaline mark. Positions 2–146 constitute a Globin domain; the sequence is HLTDGEKNAI…VANALSHKYH (145 aa). A Phosphoserine modification is found at Ser-44. At Lys-59 the chain carries N6-acetyllysine. His-63 is a binding site for heme b. Lys-82 is subject to N6-acetyllysine. His-92 is a heme b binding site. Cys-93 is modified (S-nitrosocysteine). Position 144 is an N6-acetyllysine (Lys-144).

It belongs to the globin family. As to quaternary structure, heterotetramer of two alpha chains and two beta chains. In terms of tissue distribution, red blood cells.

Involved in oxygen transport from the lung to the various peripheral tissues. This Urocitellus townsendii (Townsend's ground squirrel) protein is Hemoglobin subunit beta-S/F.